We begin with the raw amino-acid sequence, 385 residues long: tRNA(Met) cytidine acetate ligase (385 aa).

ATP is bound by residues V7–L20, G101, N153, and R178.

The protein belongs to the TmcAL family.

It localises to the cytoplasm. The enzyme catalyses cytidine(34) in elongator tRNA(Met) + acetate + ATP = N(4)-acetylcytidine(34) in elongator tRNA(Met) + AMP + diphosphate. In terms of biological role, catalyzes the formation of N(4)-acetylcytidine (ac(4)C) at the wobble position of elongator tRNA(Met), using acetate and ATP as substrates. First activates an acetate ion to form acetyladenylate (Ac-AMP) and then transfers the acetyl group to tRNA to form ac(4)C34. The chain is tRNA(Met) cytidine acetate ligase from Lactobacillus gasseri (strain ATCC 33323 / DSM 20243 / BCRC 14619 / CIP 102991 / JCM 1131 / KCTC 3163 / NCIMB 11718 / NCTC 13722 / AM63).